Reading from the N-terminus, the 128-residue chain is Fluoride-specific ion channel FluC (128 aa).

4 helical membrane passes run 8–28, 38–58, 71–91, and 103–123; these read IIFISSGAALGALSRWGLGLL, LGTLVANYLGCLIIGVFLAFF, FFVTGFLGSLTTFSTFSAEVI, and LMLASGHLLGCLLFTALGVFI. 2 residues coordinate Na(+): Gly78 and Thr81.

The protein belongs to the fluoride channel Fluc/FEX (TC 1.A.43) family.

It is found in the cell inner membrane. It carries out the reaction fluoride(in) = fluoride(out). With respect to regulation, na(+) is not transported, but it plays an essential structural role and its presence is essential for fluoride channel function. Its function is as follows. Fluoride-specific ion channel. Important for reducing fluoride concentration in the cell, thus reducing its toxicity. This chain is Fluoride-specific ion channel FluC, found in Pasteurella multocida (strain Pm70).